The primary structure comprises 440 residues: Trigger factor (440 aa).

One can recognise a PPIase FKBP-type domain in the interval 163-248 (GDGVTVDFEG…VKKIESAHLP (86 aa)).

It belongs to the FKBP-type PPIase family. Tig subfamily.

It is found in the cytoplasm. The catalysed reaction is [protein]-peptidylproline (omega=180) = [protein]-peptidylproline (omega=0). Involved in protein export. Acts as a chaperone by maintaining the newly synthesized protein in an open conformation. Functions as a peptidyl-prolyl cis-trans isomerase. The sequence is that of Trigger factor from Verminephrobacter eiseniae (strain EF01-2).